A 219-amino-acid chain; its full sequence is Ras-like protein 1 (219 aa).

A GTP-binding site is contributed by 15-22 (GDGGVGKS). Residues 37–45 (YDPTIEDSY) carry the Effector region motif. GTP contacts are provided by residues 62–66 (DTAGQ) and 121–124 (NKCD). Cys216 is modified (cysteine methyl ester). Cys216 is lipidated: S-farnesyl cysteine. A propeptide spans 217 to 219 (VIC) (removed in mature form).

It belongs to the small GTPase superfamily. Ras family. Scd1, scd2, cdc42, and ras1, in its GTP-bound state, act cooperatively to form a protein complex. Post-translationally, palmitoylated by the erf2-erf4 complex.

It localises to the cell membrane. The enzyme catalyses GTP + H2O = GDP + phosphate + H(+). Its activity is regulated as follows. Alternates between an inactive form bound to GDP and an active form bound to GTP. Activated by a guanine nucleotide-exchange factor (GEF) and inactivated by a GTPase-activating protein (GAP). Functionally, participates in the process of sexual differentiation and the determination of cell shape. Essential for mating and for recognition of the mating pheromone, but not for vegetative growth. Does not regulate the intracellular cAMP level. Regulates two downstream pathways, namely the byr2/byr1/spk1 mitogen-activated protein kinase cascade and the cdc42 small G protein pathway. The former is relevant to mating and sporulation, whereas the latter is relevant to mating, cell growth and cell morphology. This Schizosaccharomyces pombe (strain 972 / ATCC 24843) (Fission yeast) protein is Ras-like protein 1 (ras1).